The chain runs to 223 residues: Holliday junction branch migration complex subunit RuvA (223 aa).

Residues 1-64 (MIGKLTGRLD…EDLLQLFGFL (64 aa)) form a domain I region. Positions 65 to 143 (SPYEKEWHRL…AVMAMGGTLD (79 aa)) are domain II. The tract at residues 144–171 (DAMDDVVDDMPGESAAPAPAPQPRAPKR) is flexible linker. The segment at 148 to 177 (DVVDDMPGESAAPAPAPQPRAPKRPASNAQ) is disordered. The domain III stretch occupies residues 172–223 (PASNAQAEALSALQNLGYGPSDAAQAVAQAAESASNTPELIRAALRLLAPKE).

The protein belongs to the RuvA family. In terms of assembly, homotetramer. Forms an RuvA(8)-RuvB(12)-Holliday junction (HJ) complex. HJ DNA is sandwiched between 2 RuvA tetramers; dsDNA enters through RuvA and exits via RuvB. An RuvB hexamer assembles on each DNA strand where it exits the tetramer. Each RuvB hexamer is contacted by two RuvA subunits (via domain III) on 2 adjacent RuvB subunits; this complex drives branch migration. In the full resolvosome a probable DNA-RuvA(4)-RuvB(12)-RuvC(2) complex forms which resolves the HJ.

It is found in the cytoplasm. In terms of biological role, the RuvA-RuvB-RuvC complex processes Holliday junction (HJ) DNA during genetic recombination and DNA repair, while the RuvA-RuvB complex plays an important role in the rescue of blocked DNA replication forks via replication fork reversal (RFR). RuvA specifically binds to HJ cruciform DNA, conferring on it an open structure. The RuvB hexamer acts as an ATP-dependent pump, pulling dsDNA into and through the RuvAB complex. HJ branch migration allows RuvC to scan DNA until it finds its consensus sequence, where it cleaves and resolves the cruciform DNA. This chain is Holliday junction branch migration complex subunit RuvA, found in Jannaschia sp. (strain CCS1).